A 61-amino-acid chain; its full sequence is Large ribosomal subunit protein bL28 (61 aa).

The interval 1 to 26 (MAKDFVTGKHTRFGNTRSHALNHSRR) is disordered.

It belongs to the bacterial ribosomal protein bL28 family.

This is Large ribosomal subunit protein bL28 from Pediococcus pentosaceus (strain ATCC 25745 / CCUG 21536 / LMG 10740 / 183-1w).